A 287-amino-acid chain; its full sequence is Ribosomal RNA small subunit methyltransferase A (287 aa).

6 residues coordinate S-adenosyl-L-methionine: asparagine 28, leucine 30, glycine 55, glutamate 77, aspartate 103, and asparagine 123.

The protein belongs to the class I-like SAM-binding methyltransferase superfamily. rRNA adenine N(6)-methyltransferase family. RsmA subfamily.

The protein resides in the cytoplasm. It carries out the reaction adenosine(1518)/adenosine(1519) in 16S rRNA + 4 S-adenosyl-L-methionine = N(6)-dimethyladenosine(1518)/N(6)-dimethyladenosine(1519) in 16S rRNA + 4 S-adenosyl-L-homocysteine + 4 H(+). Functionally, specifically dimethylates two adjacent adenosines (A1518 and A1519) in the loop of a conserved hairpin near the 3'-end of 16S rRNA in the 30S particle. May play a critical role in biogenesis of 30S subunits. The polypeptide is Ribosomal RNA small subunit methyltransferase A (Rhodopseudomonas palustris (strain BisB5)).